The primary structure comprises 207 residues: Large ribosomal subunit protein uL4 (207 aa).

The segment at 44 to 71 (RRQGTQSAKTRAEVRGGGRKPWKQKGTG) is disordered. The span at 60 to 71 (GGRKPWKQKGTG) shows a compositional bias: basic residues.

This sequence belongs to the universal ribosomal protein uL4 family. In terms of assembly, part of the 50S ribosomal subunit.

One of the primary rRNA binding proteins, this protein initially binds near the 5'-end of the 23S rRNA. It is important during the early stages of 50S assembly. It makes multiple contacts with different domains of the 23S rRNA in the assembled 50S subunit and ribosome. In terms of biological role, forms part of the polypeptide exit tunnel. The polypeptide is Large ribosomal subunit protein uL4 (Alkaliphilus oremlandii (strain OhILAs) (Clostridium oremlandii (strain OhILAs))).